The primary structure comprises 436 residues: Proteasome-activating nucleotidase (436 aa).

The stretch at 7 to 98 forms a coiled coil; sequence KDVRDLCEKF…LRSDLQRMKK (92 aa). ATP is bound by residues 223-228 and histidine 362; that span reads GTGKTL. The interval 434 to 436 is docks into pockets in the proteasome alpha-ring to cause gate opening; it reads AYH.

It belongs to the AAA ATPase family. Homohexamer. The hexameric complex has a two-ring architecture resembling a top hat that caps the 20S proteasome core at one or both ends. Upon ATP-binding, the C-terminus of PAN interacts with the alpha-rings of the proteasome core by binding to the intersubunit pockets.

The protein resides in the cytoplasm. Functionally, ATPase which is responsible for recognizing, binding, unfolding and translocation of substrate proteins into the archaeal 20S proteasome core particle. Is essential for opening the gate of the 20S proteasome via an interaction with its C-terminus, thereby allowing substrate entry and access to the site of proteolysis. Thus, the C-termini of the proteasomal ATPase function like a 'key in a lock' to induce gate opening and therefore regulate proteolysis. Unfolding activity requires energy from ATP hydrolysis, whereas ATP binding alone promotes ATPase-20S proteasome association which triggers gate opening, and supports translocation of unfolded substrates. The chain is Proteasome-activating nucleotidase from Methanopyrus kandleri (strain AV19 / DSM 6324 / JCM 9639 / NBRC 100938).